The chain runs to 834 residues: Ras GTPase-activating protein 3 (834 aa).

C2 domains lie at 1 to 112 (MAVE…DTWF) and 123 to 263 (VQGK…EAWY). At Ala-2 the chain carries N-acetylalanine. Tyr-66 bears the Phosphotyrosine mark. A Phosphoserine modification is found at Ser-77. A Phosphothreonine modification is found at Thr-110. Residues 346–561 (GRVVPFISAI…DAVKNFLDLI (216 aa)) enclose the Ras-GAP domain. Residues 576 to 677 (ILLKEGFMIK…WIDILTKVSQ (102 aa)) form the PH domain. The Btk-type zinc-finger motif lies at 679-715 (NQKRLAVYHPSAYLNGHWLCCRASSDTAAGCSPCTGG). Positions 687, 698, 699, and 709 each coordinate Zn(2+). The disordered stretch occupies residues 806–834 (KYGSQEHPIGDKSFQSYIRQQSETPAHSM). A phosphoserine mark is found at Ser-809 and Ser-833. The span at 818 to 834 (SFQSYIRQQSETPAHSM) shows a compositional bias: polar residues.

In terms of biological role, inhibitory regulator of the Ras-cyclic AMP pathway. May bind inositol tetrakisphosphate (IP4). The chain is Ras GTPase-activating protein 3 (RASA3) from Bos taurus (Bovine).